Here is a 489-residue protein sequence, read N- to C-terminus: Glutamyl-tRNA(Gln) amidotransferase subunit A (489 aa).

Active-site charge relay system residues include lysine 80 and serine 160. Residue serine 184 is the Acyl-ester intermediate of the active site.

It belongs to the amidase family. GatA subfamily. Heterotrimer of A, B and C subunits.

The catalysed reaction is L-glutamyl-tRNA(Gln) + L-glutamine + ATP + H2O = L-glutaminyl-tRNA(Gln) + L-glutamate + ADP + phosphate + H(+). Allows the formation of correctly charged Gln-tRNA(Gln) through the transamidation of misacylated Glu-tRNA(Gln) in organisms which lack glutaminyl-tRNA synthetase. The reaction takes place in the presence of glutamine and ATP through an activated gamma-phospho-Glu-tRNA(Gln). The protein is Glutamyl-tRNA(Gln) amidotransferase subunit A of Wolbachia sp. subsp. Drosophila simulans (strain wRi).